Reading from the N-terminus, the 612-residue chain is DNA mismatch repair protein MutL (612 aa).

This sequence belongs to the DNA mismatch repair MutL/HexB family.

This protein is involved in the repair of mismatches in DNA. It is required for dam-dependent methyl-directed DNA mismatch repair. May act as a 'molecular matchmaker', a protein that promotes the formation of a stable complex between two or more DNA-binding proteins in an ATP-dependent manner without itself being part of a final effector complex. The chain is DNA mismatch repair protein MutL from Herminiimonas arsenicoxydans.